We begin with the raw amino-acid sequence, 424 residues long: MLDIKFVRANPEKLKEALDKRGYQIDFEEFLSLERERLLLLREIEQKRAIRNSVSQEIAHLKKLKSDNETIDKLIAEMRKLGEELGSIEQKLREIEDKVQNFLLFLPNIPHDSVPLGKDENENVEIRRWGEPSHFDFEPMNHWDIGEILGIIDFERASKIAGSRFAIMKGMGARLERALINFMLDLHTQKGYIEVLPPILVNKVSMTGTGQLPKFEEDLFKIVDPEFYLIPTAEVPVTNIHREEILSEDELPIYYVSYTPCFRKEAGSHGKDVRGLIRQHQFNKVELVKFVKPEDSYEELESLTRDAEEVLKMLGLPYRVVALCTGDLGFASAKTYDIEVWLPGQGRYREISSCSNFEDFQARRANIRFRRRDKKGTEFVHTLNGSGLAIGRTLVAILENYQQKDGSVIVPEVLRPYMGIDVIR.

232-234 is a binding site for L-serine; it reads TAE. 263-265 serves as a coordination point for ATP; it reads RKE. E286 lines the L-serine pocket. Residue 350 to 353 participates in ATP binding; the sequence is EISS. S386 contributes to the L-serine binding site.

This sequence belongs to the class-II aminoacyl-tRNA synthetase family. Type-1 seryl-tRNA synthetase subfamily. Homodimer. The tRNA molecule binds across the dimer.

The protein localises to the cytoplasm. The catalysed reaction is tRNA(Ser) + L-serine + ATP = L-seryl-tRNA(Ser) + AMP + diphosphate + H(+). It catalyses the reaction tRNA(Sec) + L-serine + ATP = L-seryl-tRNA(Sec) + AMP + diphosphate + H(+). It participates in aminoacyl-tRNA biosynthesis; selenocysteinyl-tRNA(Sec) biosynthesis; L-seryl-tRNA(Sec) from L-serine and tRNA(Sec): step 1/1. Functionally, catalyzes the attachment of serine to tRNA(Ser). Is also able to aminoacylate tRNA(Sec) with serine, to form the misacylated tRNA L-seryl-tRNA(Sec), which will be further converted into selenocysteinyl-tRNA(Sec). The sequence is that of Serine--tRNA ligase from Thermodesulfovibrio yellowstonii (strain ATCC 51303 / DSM 11347 / YP87).